The chain runs to 433 residues: Homoserine dehydrogenase (433 aa).

Positions 12, 13, and 102 each coordinate NADPH. Val-13 provides a ligand contact to NAD(+). 2 residues coordinate NADP(+): Val-13 and Lys-102. Glu-126, Val-129, Gly-131, and Ile-133 together coordinate Na(+). 2 residues coordinate NADP(+): Gly-184 and Glu-187. The L-homoserine site is built by Glu-187 and Asp-198. Lys-202 functions as the Proton donor in the catalytic mechanism. Residue Gly-303 participates in NADPH binding. Residue Gly-303 coordinates NAD(+). Residue Gly-303 coordinates NADP(+). The ACT domain occupies 356–433 (YCRFLCADVP…EIPSVIRVLS (78 aa)).

Belongs to the homoserine dehydrogenase family. Requires a metal cation as cofactor.

It catalyses the reaction L-homoserine + NADP(+) = L-aspartate 4-semialdehyde + NADPH + H(+). It carries out the reaction L-homoserine + NAD(+) = L-aspartate 4-semialdehyde + NADH + H(+). It participates in amino-acid biosynthesis; L-methionine biosynthesis via de novo pathway; L-homoserine from L-aspartate: step 3/3. Its pathway is amino-acid biosynthesis; L-threonine biosynthesis; L-threonine from L-aspartate: step 3/5. Its function is as follows. Catalyzes the conversion of L-aspartate-beta-semialdehyde (L-Asa) to L-homoserine (L-Hse), the third step in the biosynthesis of threonine and methionine from aspartate. In Synechocystis sp. (strain ATCC 27184 / PCC 6803 / Kazusa), this protein is Homoserine dehydrogenase (hom).